A 291-amino-acid polypeptide reads, in one-letter code: Elongation factor Ts (291 aa).

An involved in Mg(2+) ion dislocation from EF-Tu region spans residues 79 to 82 (TDFV).

The protein belongs to the EF-Ts family.

It localises to the cytoplasm. In terms of biological role, associates with the EF-Tu.GDP complex and induces the exchange of GDP to GTP. It remains bound to the aminoacyl-tRNA.EF-Tu.GTP complex up to the GTP hydrolysis stage on the ribosome. The polypeptide is Elongation factor Ts (Leuconostoc mesenteroides subsp. mesenteroides (strain ATCC 8293 / DSM 20343 / BCRC 11652 / CCM 1803 / JCM 6124 / NCDO 523 / NBRC 100496 / NCIMB 8023 / NCTC 12954 / NRRL B-1118 / 37Y)).